A 116-amino-acid polypeptide reads, in one-letter code: Aspartate 1-decarboxylase (116 aa).

Catalysis depends on Ser25, which acts as the Schiff-base intermediate with substrate; via pyruvic acid. Pyruvic acid (Ser) is present on Ser25. Thr57 contacts substrate. Tyr58 functions as the Proton donor in the catalytic mechanism. Position 72 to 74 (72 to 74) interacts with substrate; that stretch reads GAA.

This sequence belongs to the PanD family. Heterooctamer of four alpha and four beta subunits. Pyruvate serves as cofactor. Post-translationally, is synthesized initially as an inactive proenzyme, which is activated by self-cleavage at a specific serine bond to produce a beta-subunit with a hydroxyl group at its C-terminus and an alpha-subunit with a pyruvoyl group at its N-terminus.

It is found in the cytoplasm. The catalysed reaction is L-aspartate + H(+) = beta-alanine + CO2. The protein operates within cofactor biosynthesis; (R)-pantothenate biosynthesis; beta-alanine from L-aspartate: step 1/1. In terms of biological role, catalyzes the pyruvoyl-dependent decarboxylation of aspartate to produce beta-alanine. This chain is Aspartate 1-decarboxylase, found in Helicobacter acinonychis (strain Sheeba).